A 454-amino-acid polypeptide reads, in one-letter code: Probable 1,4-beta-D-glucan cellobiohydrolase C (454 aa).

A signal peptide spans methionine 1–alanine 19. The CBM1 domain occupies glutamine 20–isoleucine 55. 2 cysteine pairs are disulfide-bonded: cysteine 27–cysteine 44 and cysteine 38–cysteine 54. Thr-rich linker regions lie at residues threonine 59–threonine 94 and alanine 95–phenylalanine 454. Residues threonine 68–alanine 95 are disordered. Aspartate 184 is a catalytic residue. 2 cysteine pairs are disulfide-bonded: cysteine 185–cysteine 244 and cysteine 376–cysteine 423. Catalysis depends on aspartate 230, which acts as the Proton donor. Aspartate 409 (nucleophile) is an active-site residue. An N-linked (GlcNAc...) asparagine glycan is attached at asparagine 413.

The protein belongs to the glycosyl hydrolase 6 (cellulase B) family.

Its subcellular location is the secreted. The enzyme catalyses Hydrolysis of (1-&gt;4)-beta-D-glucosidic linkages in cellulose and cellotetraose, releasing cellobiose from the non-reducing ends of the chains.. Its function is as follows. The biological conversion of cellulose to glucose generally requires three types of hydrolytic enzymes: (1) Endoglucanases which cut internal beta-1,4-glucosidic bonds; (2) Exocellobiohydrolases that cut the disaccharide cellobiose from the non-reducing end of the cellulose polymer chain; (3) Beta-1,4-glucosidases which hydrolyze the cellobiose and other short cello-oligosaccharides to glucose. The protein is Probable 1,4-beta-D-glucan cellobiohydrolase C (cbhC) of Aspergillus fumigatus (strain CBS 144.89 / FGSC A1163 / CEA10) (Neosartorya fumigata).